Reading from the N-terminus, the 335-residue chain is Olfactory receptor 10R2 (335 aa).

Topologically, residues 1–45 are extracellular; it reads MPQILIFTYLNMFYFFPPLQILAENLTMVTEFLLLGFSSLGEIQL. N-linked (GlcNAc...) asparagine glycosylation is present at N25. The helical transmembrane segment at 46–66 threads the bilayer; that stretch reads ALFVVFLFLYLVILSGNVTII. Residues 67-74 are Cytoplasmic-facing; it reads SVIHLDKS. A helical transmembrane segment spans residues 75–95; it reads LHTPMYFFLGILSTSETFYTF. Residues 96–119 are Extracellular-facing; it reads VILPKMLINLLSVARTISFNCCAL. C117 and C209 are joined by a disulfide. A helical transmembrane segment spans residues 120-140; it reads QMFFFLGFAITNCLLLGVMGY. The Cytoplasmic segment spans residues 141–159; it reads DRYAAICHPLHYPTLMSWQ. The chain crosses the membrane as a helical span at residues 160 to 180; the sequence is VCGKLAAACAIGGFLASLTVV. The Extracellular portion of the chain corresponds to 181 to 217; the sequence is NLVFSLPFCSANKVNHYFCDISAVILLACTNTDVNEF. Residues 218–237 traverse the membrane as a helical segment; the sequence is VIFICGVLVLVVPFLFICVS. At 238 to 257 the chain is on the cytoplasmic side; the sequence is YLCILRTILKIPSAEGRRKA. The chain crosses the membrane as a helical span at residues 258–278; that stretch reads FSTCASHLSVVIVHYGCASFI. Over 279–291 the chain is Extracellular; it reads YLRPTANYVSNKD. The helical transmembrane segment at 292 to 312 threads the bilayer; sequence RLVTVTYTIVTPLLNPMVYSL. The Cytoplasmic portion of the chain corresponds to 313–335; sequence RNKDVQLAIRKVLGKKGSLKLYN.

The protein belongs to the G-protein coupled receptor 1 family.

Its subcellular location is the cell membrane. Functionally, odorant receptor. The polypeptide is Olfactory receptor 10R2 (OR10R2) (Homo sapiens (Human)).